The sequence spans 427 residues: Homoprotocatechuate catabolism bifunctional isomerase/decarboxylase (427 aa).

2 Approximate repeats span residues 1 to 202 (MKGT…LENP) and 203 to 405 (VVDE…VGDE). The a divalent metal cation site is built by Glu-276, Glu-278, and Asp-307.

The protein belongs to the FAH family. In terms of assembly, monomer. Mg(2+) is required as a cofactor.

It carries out the reaction (2E,4Z)-5-hydroxypenta-2,4-diene-1,2,5-tricarboxylate = (3E,5R)-5-carboxy-2-oxohept-3-enedioate. It catalyses the reaction (3E,5R)-5-carboxy-2-oxohept-3-enedioate + H(+) = (4Z)-2-oxohept-4-enedioate + CO2. It functions in the pathway aromatic compound metabolism; 4-hydroxyphenylacetate degradation; pyruvate and succinate semialdehyde from 4-hydroxyphenylacetate: step 4/7. The protein operates within aromatic compound metabolism; 4-hydroxyphenylacetate degradation; pyruvate and succinate semialdehyde from 4-hydroxyphenylacetate: step 5/7. Functionally, decarboxylates OPET (5-oxo-pent-3-ene-1,2,5-tricarboxylic acid) into HHDD (2-hydroxy-hept-2,4-diene-1,7-dioate) and isomerizes it to OHED (2-oxo-hept-3-ene-1,7-dioate). This chain is Homoprotocatechuate catabolism bifunctional isomerase/decarboxylase (hpcE), found in Escherichia coli.